The following is a 282-amino-acid chain: Casein kinase II subunit beta-2 (282 aa).

Residues 1–92 form a disordered region; it reads MYRERGMVGS…ESEVSGSDGE (92 aa). Residues 13-28 show a composition bias toward basic and acidic residues; the sequence is EVVDRKRINEIHDNRP. 2 stretches are compositionally biased toward polar residues: residues 29–47 and 61–71; these read SHSM…STSV and RSGSISKTNIS. The span at 75-92 shows a compositional bias: acidic residues; the sequence is DISDTDSEESEVSGSDGE.

This sequence belongs to the casein kinase 2 subunit beta family. Heterotetramer of two catalytic alpha subunits and two regulatory beta subunits. Interacts with CCA1. In terms of processing, phosphorylated by alpha subunit.

The protein localises to the cytoplasm. The protein resides in the cytosol. Its subcellular location is the nucleus. Functionally, plays a complex role in regulating the basal catalytic activity of the alpha subunit. The tetrameric holoenzyme CK2, composed of two alpha and two beta subunits, phosphorylates the transcription factor PIF1 after an exposure to light, resulting in a proteasome-dependent degradation of PIF1 and promotion of photomorphogenesis. CK2 phosphorylates translation initiation factors. May participate in the regulation of the initiation of translation. The polypeptide is Casein kinase II subunit beta-2 (CKB2) (Arabidopsis thaliana (Mouse-ear cress)).